The following is a 359-amino-acid chain: Patr class I histocompatibility antigen, B-1 alpha chain (359 aa).

Residues 1 to 20 (APRTVLLLLSAALALTETWA) form the signal peptide. The interval 21 to 110 (GSHSMRYFYT…ALRYYNQSEA (90 aa)) is alpha-1. The Extracellular segment spans residues 21 to 305 (GSHSMRYFYT…PSSQSTIPIV (285 aa)). N-linked (GlcNAc...) asparagine glycosylation is present at asparagine 106. Residues 111 to 202 (GSHTWQTMYG…ENGKETLQRA (92 aa)) form an alpha-2 region. Intrachain disulfides connect cysteine 121–cysteine 184 and cysteine 223–cysteine 279. The interval 203–294 (DPPKTHVTHH…GLPKPLTLRW (92 aa)) is alpha-3. An Ig-like C1-type domain is found at 205-291 (PKTHVTHHPI…QHEGLPKPLT (87 aa)). The segment at 295–305 (EPSSQSTIPIV) is connecting peptide. Residues 306–329 (GIVAGLAVLVVTVAVVAVVAAVMC) traverse the membrane as a helical segment. Topologically, residues 330–359 (RRKSSGGKGGSYSQAASSDSAQGSDVSLTA) are cytoplasmic. The tract at residues 332-359 (KSSGGKGGSYSQAASSDSAQGSDVSLTA) is disordered. Over residues 340 to 359 (SYSQAASSDSAQGSDVSLTA) the composition is skewed to low complexity. Phosphoserine is present on residues serine 353 and serine 356.

The protein belongs to the MHC class I family. As to quaternary structure, heterodimer of an alpha chain and a beta chain (beta-2-microglobulin).

It localises to the membrane. Involved in the presentation of foreign antigens to the immune system. The sequence is that of Patr class I histocompatibility antigen, B-1 alpha chain from Pan troglodytes (Chimpanzee).